A 174-amino-acid chain; its full sequence is RNA pyrophosphohydrolase (174 aa).

The Nudix hydrolase domain maps to Gly-6 to Lys-149. The Nudix box motif lies at Gly-38–Gly-59.

It belongs to the Nudix hydrolase family. RppH subfamily. It depends on a divalent metal cation as a cofactor.

Accelerates the degradation of transcripts by removing pyrophosphate from the 5'-end of triphosphorylated RNA, leading to a more labile monophosphorylated state that can stimulate subsequent ribonuclease cleavage. The polypeptide is RNA pyrophosphohydrolase (Neisseria meningitidis serogroup C / serotype 2a (strain ATCC 700532 / DSM 15464 / FAM18)).